Here is a 480-residue protein sequence, read N- to C-terminus: 2-phosphoxylose phosphatase 1 (480 aa).

Residues 1–6 (MLYRNR) are Cytoplasmic-facing. A helical; Signal-anchor for type II membrane protein transmembrane segment spans residues 7 to 27 (FLVLLALAGLLAFLSLSLQFF). Over 28-480 (HLIPVSTTKN…YYDACHGEGA (453 aa)) the chain is Lumenal. The active-site Nucleophile is histidine 97. 3 N-linked (GlcNAc...) asparagine glycosylation sites follow: asparagine 194, asparagine 305, and asparagine 354. Aspartate 379 acts as the Proton donor in catalysis.

It belongs to the histidine acid phosphatase family. As to quaternary structure, interacts with B3GAT3; the interaction increases the 2-phosphoxylose phosphatase activity of PXYLP1 during completion of linkage region formation in a B3GAT3-mediated manner.

It localises to the golgi apparatus membrane. The enzyme catalyses 3-O-[beta-D-GlcA-(1-&gt;3)-beta-D-Gal-(1-&gt;3)-beta-D-Gal-(1-&gt;4)-beta-D-2-O-P-Xyl]-L-seryl-[protein] + H2O = 3-O-(beta-D-GlcA-(1-&gt;3)-beta-D-Gal-(1-&gt;3)-beta-D-Gal-(1-&gt;4)-beta-D-Xyl)-L-seryl-[protein] + phosphate. Functionally, responsible for the 2-O-dephosphorylation of xylose in the glycosaminoglycan-protein linkage region of proteoglycans thereby regulating the amount of mature glycosaminoglycan (GAG) chains. Sulfated glycosaminoglycans (GAGs), including heparan sulfate and chondroitin sulfate, are synthesized on the so-called common GAG-protein linkage region (GlcUAbeta1-3Galbeta1-3Galbeta1-4Xylbeta1-O-Ser) of core proteins, which is formed by the stepwise addition of monosaccharide residues by the respective specific glycosyltransferases. Xylose 2-O-dephosphorylation during completion of linkage region formation is a prerequisite for the initiation and efficient elongation of the repeating disaccharide region of GAG chains. The protein is 2-phosphoxylose phosphatase 1 of Rattus norvegicus (Rat).